Here is a 488-residue protein sequence, read N- to C-terminus: Zinc metalloproteinase-disintegrin agkistin (488 aa).

The N-terminal stretch at 1 to 20 (MIQVLLVTICLAVFPYQGSS) is a signal peptide. A propeptide spanning residues 21-195 (IILESGNVND…NFPPDGRIEF (175 aa)) is cleaved from the precursor. The 197-residue stretch at 198-394 (RYIELVIVAD…NPLASYCLYN (197 aa)) folds into the Peptidase M12B domain. E201 lines the Ca(2+) pocket. N-linked (GlcNAc...) asparagine glycosylation is present at N258. A Ca(2+)-binding site is contributed by D285. Disulfide bonds link C309–C391, C349–C373, and C351–C356. H334 provides a ligand contact to Zn(2+). The active site involves E335. Residues H338 and H344 each coordinate Zn(2+). Ca(2+)-binding residues include C391, N394, V406, N409, E413, E416, and D419. The 85-residue stretch at 404 to 488 (PPVCGNYYLE…AGCPRNPSHA (85 aa)) folds into the Disintegrin domain. 7 disulfides stabilise this stretch: C407-C426, C418-C436, C420-C431, C430-C453, C444-C450, C449-C474, and C462-C481. The short motif at 466 to 468 (RGD) is the Cell attachment site element.

It belongs to the venom metalloproteinase (M12B) family. P-II subfamily. P-IIb sub-subfamily. As to quaternary structure, monomer. Zn(2+) serves as cofactor. As to expression, expressed by the venom gland.

The protein localises to the secreted. Inhibits ADP-induced human platelet aggregation, inhibits bovine aortic endothelial cells (BAEC) migration, has anti-angiogenic activity and induces BAEC and human micro-vascular endothelial cell (HMEC) apoptosis. The metalloproteinase domain may act in hemorrhage. The polypeptide is Zinc metalloproteinase-disintegrin agkistin (Gloydius halys (Chinese water mocassin)).